Here is a 368-residue protein sequence, read N- to C-terminus: Transmembrane protein 26 (368 aa).

The next 3 membrane-spanning stretches (helical) occupy residues 4–24 (LVFL…LVGV), 36–56 (YWLL…TLKF), and 65–85 (FSPA…LLEL). Residue N110 is glycosylated (N-linked (GlcNAc...) asparagine). 5 helical membrane-spanning segments follow: residues 150 to 170 (QTFL…GGIT), 177 to 197 (LLLM…ETLE), 208 to 228 (VYAI…DLAV), 257 to 277 (IGIS…ILMT), and 281 to 301 (VINQ…VLQL). The segment at 324-368 (GEHGCRAQTSESGPSQRDWQNESKEGLAIPLRGSPVTSDDSHHTP) is disordered. A compositionally biased stretch (polar residues) spans 330-341 (AQTSESGPSQRD).

It localises to the membrane. This chain is Transmembrane protein 26 (TMEM26), found in Homo sapiens (Human).